Reading from the N-terminus, the 170-residue chain is Transmembrane protein 252 (170 aa).

A run of 2 helical transmembrane segments spans residues 8–28 (ILCA…AFFI) and 40–60 (LIAA…GIFW). The disordered stretch occupies residues 112-147 (CPAEREASGIPPPLYTETGLEFQDGNDSHPEAPPSY).

Its subcellular location is the membrane. The sequence is that of Transmembrane protein 252 (TMEM252) from Pongo abelii (Sumatran orangutan).